A 369-amino-acid chain; its full sequence is Uroporphyrinogen decarboxylase (369 aa).

Substrate contacts are provided by residues 28 to 32 (RQAGR), aspartate 78, tyrosine 154, serine 209, and histidine 339.

The protein belongs to the uroporphyrinogen decarboxylase family. As to quaternary structure, homodimer.

The protein localises to the cytoplasm. The enzyme catalyses uroporphyrinogen III + 4 H(+) = coproporphyrinogen III + 4 CO2. The protein operates within porphyrin-containing compound metabolism; protoporphyrin-IX biosynthesis; coproporphyrinogen-III from 5-aminolevulinate: step 4/4. Functionally, catalyzes the decarboxylation of four acetate groups of uroporphyrinogen-III to yield coproporphyrinogen-III. The protein is Uroporphyrinogen decarboxylase of Polaromonas naphthalenivorans (strain CJ2).